The chain runs to 278 residues: 4-deoxy-L-threo-5-hexosulose-uronate ketol-isomerase (278 aa).

4 residues coordinate Zn(2+): His-196, His-198, Glu-203, and His-245.

It belongs to the KduI family. Zn(2+) serves as cofactor.

It carries out the reaction 5-dehydro-4-deoxy-D-glucuronate = 3-deoxy-D-glycero-2,5-hexodiulosonate. It functions in the pathway glycan metabolism; pectin degradation; 2-dehydro-3-deoxy-D-gluconate from pectin: step 4/5. Functionally, catalyzes the isomerization of 5-dehydro-4-deoxy-D-glucuronate to 3-deoxy-D-glycero-2,5-hexodiulosonate. The protein is 4-deoxy-L-threo-5-hexosulose-uronate ketol-isomerase of Salmonella typhimurium (strain LT2 / SGSC1412 / ATCC 700720).